A 215-amino-acid polypeptide reads, in one-letter code: Osteoclast-stimulating factor 1 (215 aa).

S2 bears the N-acetylserine mark. One can recognise an SH3 domain in the interval G12–E71. ANK repeat units follow at residues S72–G101, A105–Q135, and L139–L168. The disordered stretch occupies residues K192–D215. Position 201 is a phosphothreonine (T201). S203 and S214 each carry phosphoserine.

As to quaternary structure, interacts with C-SRC and SMN1. Interacts with FASLG.

The protein localises to the cytoplasm. Induces bone resorption, acting probably through a signaling cascade which results in the secretion of factor(s) enhancing osteoclast formation and activity. The chain is Osteoclast-stimulating factor 1 (Ostf1) from Mus musculus (Mouse).